Reading from the N-terminus, the 504-residue chain is UDP-GalNAc:beta-1,3-N-acetylgalactosaminyltransferase 2 (504 aa).

Residues 1-3 are Cytoplasmic-facing; the sequence is MRN. The chain crosses the membrane as a helical; Signal-anchor for type II membrane protein span at residues 4–24; sequence WLVLLCPCVLGAALHLWHLWL. Over 25-504 the chain is Lumenal; the sequence is RSPPDPHNTG…DPCQCEAKVR (480 aa). Residues Asn-117 and Asn-176 are each glycosylated (N-linked (GlcNAc...) asparagine).

Belongs to the glycosyltransferase 31 family. In terms of processing, N-glycosylated. Present in testis (at protein level). In testis, it is mainly detected in the middle layers of seminiferous tubules at stages XII to II. Strongly expressed in primary and secondary spermatocytes and early round spermatids, but not in spermatogonia, elongating or elongated spermatids, or in Leydig or Sertoli cells.

It is found in the golgi apparatus membrane. It localises to the endoplasmic reticulum. The enzyme catalyses 3-O-(N-acetyl-beta-D-glucosaminyl-(1-&gt;4)-alpha-D-mannosyl)-L-threonyl-[protein] + UDP-N-acetyl-alpha-D-galactosamine = 3-O-[beta-D-GalNAc-(1-&gt;3)-beta-D-GlcNAc-(1-&gt;4)-alpha-D-Man]-L-Thr-[protein] + UDP + H(+). The protein operates within protein modification; protein glycosylation. Functionally, beta-1,3-N-acetylgalactosaminyltransferase that synthesizes a unique carbohydrate structure, GalNAc-beta-1-3GlcNAc, on N- and O-glycans. Has no galactose nor galactosaminyl transferase activity toward any acceptor substrate. Involved in alpha-dystroglycan (DAG1) glycosylation: acts coordinately with GTDC2/POMGnT2 to synthesize a GalNAc-beta3-GlcNAc-beta-terminus at the 4-position of protein O-mannose in the biosynthesis of the phosphorylated O-mannosyl trisaccharide (N-acetylgalactosamine-beta-3-N-acetylglucosamine-beta-4-(phosphate-6-)mannose), a carbohydrate structure present in alpha-dystroglycan, which is required for binding laminin G-like domain-containing extracellular proteins with high affinity. The chain is UDP-GalNAc:beta-1,3-N-acetylgalactosaminyltransferase 2 (B3galnt2) from Mus musculus (Mouse).